The sequence spans 287 residues: Small ribosomal subunit biogenesis GTPase RsgA (287 aa).

The 161-residue stretch at 63–223 (KNLLIRPKVA…VIDTPGFGSL (161 aa)) folds into the CP-type G domain. GTP is bound by residues 113–116 (SKMD) and 166–174 (GQSGVGKST). Zn(2+) contacts are provided by Cys-246, Cys-251, His-253, and Cys-259.

It belongs to the TRAFAC class YlqF/YawG GTPase family. RsgA subfamily. In terms of assembly, monomer. Associates with 30S ribosomal subunit, binds 16S rRNA. Requires Zn(2+) as cofactor.

It localises to the cytoplasm. In terms of biological role, one of several proteins that assist in the late maturation steps of the functional core of the 30S ribosomal subunit. Helps release RbfA from mature subunits. May play a role in the assembly of ribosomal proteins into the subunit. Circularly permuted GTPase that catalyzes slow GTP hydrolysis, GTPase activity is stimulated by the 30S ribosomal subunit. The chain is Small ribosomal subunit biogenesis GTPase RsgA from Malacoplasma penetrans (strain HF-2) (Mycoplasma penetrans).